The primary structure comprises 295 residues: Protoheme IX farnesyltransferase (295 aa).

A run of 9 helical transmembrane segments spans residues 27 to 46, 50 to 72, 93 to 115, 119 to 136, 148 to 168, 175 to 195, 219 to 239, 244 to 264, and 275 to 295; these read IMYLVVLTGITGMIIAPGSI, IAIISTLCIALGSGAAGAINMWY, ISKSSAIELGLVLSVISVTVMMI, YISGILLAISIGFYSFAY, IVIGGIAGAIPPIIGWTSVTS, LILFLIIFMWTPPHFWALSLL, VHILVYSIVLFIITLLPGLFL, LYEICAIPLGITFLFHAFKVF, and MFTYSVAYLFILFICIILASF.

This sequence belongs to the UbiA prenyltransferase family. Protoheme IX farnesyltransferase subfamily.

Its subcellular location is the cell inner membrane. The catalysed reaction is heme b + (2E,6E)-farnesyl diphosphate + H2O = Fe(II)-heme o + diphosphate. Its pathway is porphyrin-containing compound metabolism; heme O biosynthesis; heme O from protoheme: step 1/1. Functionally, converts heme B (protoheme IX) to heme O by substitution of the vinyl group on carbon 2 of heme B porphyrin ring with a hydroxyethyl farnesyl side group. The sequence is that of Protoheme IX farnesyltransferase from Ehrlichia canis (strain Jake).